Here is a 501-residue protein sequence, read N- to C-terminus: Lysine--tRNA ligase (501 aa).

Mg(2+) is bound by residues Glu411 and Glu418.

This sequence belongs to the class-II aminoacyl-tRNA synthetase family. In terms of assembly, homodimer. Mg(2+) is required as a cofactor.

The protein resides in the cytoplasm. It catalyses the reaction tRNA(Lys) + L-lysine + ATP = L-lysyl-tRNA(Lys) + AMP + diphosphate. The protein is Lysine--tRNA ligase of Clostridium perfringens (strain SM101 / Type A).